A 2294-amino-acid chain; its full sequence is Reducing polyketide synthase BOA9 (2294 aa).

The Ketosynthase family 3 (KS3) domain maps to 4 to 409; that stretch reads PEPVAIIGMG…GANATAIVEA (406 aa). The segment at 537-853 is malonyl-CoA:ACP transacylase (MAT) domain; that stretch reads IFTGQGAQNA…DYAATLVRGQ (317 aa). The active-site For malonyltransferase activity is S630. Residues 930–1067 are N-terminal hotdog fold; that stretch reads HDLLGAILPG…GTVTKKKAVT (138 aa). A dehydratase (DH) domain region spans residues 930-1104; sequence HDLLGAILPG…LNYGPAFNGL (175 aa). A PKS/mFAS DH domain is found at 930 to 1236; sequence HDLLGAILPG…CTQYSEALDD (307 aa). H962 (proton acceptor; for dehydratase activity) is an active-site residue. A C-terminal hotdog fold region spans residues 1078–1236; the sequence is QEPKAARTWY…CTQYSEALDD (159 aa). D1142 functions as the Proton donor; for dehydratase activity in the catalytic mechanism. Residues 1618 to 1908 form an enoyl reductase (ER) domain region; the sequence is GIFDTIHFKD…KNSRIGRVVV (291 aa). The tract at residues 1934–2107 is ketoreductase (KR) domain; it reads VHTYLLGVLE…LPATTISLTV (174 aa). One can recognise a Carrier domain in the interval 2214–2292; it reads LLLPDILEMI…SLAKKIYDIR (79 aa). S2251 is modified (O-(pantetheine 4'-phosphoryl)serine).

Its pathway is polyketide biosynthesis. In terms of biological role, reducing polyketide synthase; part of the gene cluster B that mediates the biosynthesis of botcinic acid and its botcinin derivatives, acetate-derived polyketides that contribute to virulence when combined with the sesquiterpene botrydial. Botcinic acid and its derivatives have been shown to induce chlorosis and necrosis during host plant infection, but also have antifungal activities. Two polyketide synthases, BOA6 and BOA9, are involved in the biosynthesis of botcinins. BOA6 mediates the formation of the per-methylated tetraketide core by condensation of four units of malonyl-CoA with one unit of acetyl-CoA, which would be methylated in activated methylene groups to yield a bicyclic acid intermediate that could then either be converted to botrylactone derivatives or lose the starter acetate unit through a retro-Claisen type C-C bond cleavage to yield botcinin derivatives. The second polyketide synthase, BOA9, is probably required for the biosynthesis of the tetraketide side chain of botcinins. The methyltransferase (MT) domain within BOA6 is probably responsible for the incorporation of four methyl groups. The trans-enoyl reductase BOA5 might take over the enoyl reductase function of BOA6 that misses an ER domain. The monooxygenases BOA2, BOA3 and BOA4 might be involved in further hydroxylations at C4, C5 and C8, whereas BOA7, close to BOA9, could potentially be involved in the hydroxylation at C4 in the side chain of botcinins. The chain is Reducing polyketide synthase BOA9 from Botryotinia fuckeliana (strain B05.10) (Noble rot fungus).